The primary structure comprises 435 residues: uncharacterized protein (435 aa).

Helical transmembrane passes span Val14 to Ala34, Thr44 to Ala64, Ile84 to Phe104, Phe123 to Gly143, Phe153 to Ile173, Val187 to Ile207, Ala224 to Ile244, Phe267 to Ala287, Leu324 to Ala344, Ile346 to Ile366, Ile375 to Trp395, and Phe400 to Arg420.

The protein resides in the cell membrane. This is an uncharacterized protein from Methanocaldococcus jannaschii (strain ATCC 43067 / DSM 2661 / JAL-1 / JCM 10045 / NBRC 100440) (Methanococcus jannaschii).